A 121-amino-acid polypeptide reads, in one-letter code: Cysteine-rich neurotrophic factor (121 aa).

The first 18 residues, 1-18 (MLLKLIVALSLTLTLASA), serve as a signal peptide directing secretion. A glycan (N-linked (GlcNAc...) asparagine) is linked at Asn57.

Its subcellular location is the secreted. Interacts with the p75 low-affinity neurotrophin receptor. Evokes neurite outgrowth and modulated calcium currents in pedal motor neurons. May be involved in target-derived trophic support for motor neurons. The chain is Cysteine-rich neurotrophic factor from Lymnaea stagnalis (Great pond snail).